Consider the following 497-residue polypeptide: Probable malate:quinone oxidoreductase (497 aa).

The protein belongs to the MQO family. The cofactor is FAD.

The enzyme catalyses (S)-malate + a quinone = a quinol + oxaloacetate. It participates in carbohydrate metabolism; tricarboxylic acid cycle; oxaloacetate from (S)-malate (quinone route): step 1/1. The protein is Probable malate:quinone oxidoreductase of Wolinella succinogenes (strain ATCC 29543 / DSM 1740 / CCUG 13145 / JCM 31913 / LMG 7466 / NCTC 11488 / FDC 602W) (Vibrio succinogenes).